Consider the following 167-residue polypeptide: Peptide deformylase (167 aa).

Fe cation-binding residues include cysteine 91 and histidine 133. The active site involves glutamate 134. Position 137 (histidine 137) interacts with Fe cation.

It belongs to the polypeptide deformylase family. Fe(2+) is required as a cofactor.

It carries out the reaction N-terminal N-formyl-L-methionyl-[peptide] + H2O = N-terminal L-methionyl-[peptide] + formate. Functionally, removes the formyl group from the N-terminal Met of newly synthesized proteins. Requires at least a dipeptide for an efficient rate of reaction. N-terminal L-methionine is a prerequisite for activity but the enzyme has broad specificity at other positions. This chain is Peptide deformylase, found in Pseudoalteromonas translucida (strain TAC 125).